An 80-amino-acid polypeptide reads, in one-letter code: uncharacterized protein (80 aa).

This is an uncharacterized protein from Acidianus filamentous virus 1 (isolate United States/Yellowstone) (AFV-1).